The chain runs to 236 residues: uncharacterized protein (236 aa).

It is found in the plastid. The protein localises to the chloroplast. This is an uncharacterized protein from Chlorella vulgaris (Green alga).